A 226-amino-acid polypeptide reads, in one-letter code: Clarin-3 (226 aa).

Residues 8–28 (LMFLSGFLTSLGSVVVICSIL) form a helical membrane-spanning segment. Residues asparagine 46 and asparagine 83 are each glycosylated (N-linked (GlcNAc...) asparagine). The next 3 membrane-spanning stretches (helical) occupy residues 92–112 (VVIILLILSLAASLLSSMFTF), 128–148 (GVYTWNGLSASFVFLTMVLFV), and 181–201 (FWLILLVILLNIVTVVIIIFY).

This sequence belongs to the clarin family.

It localises to the membrane. The protein is Clarin-3 (Clrn3) of Rattus norvegicus (Rat).